A 532-amino-acid polypeptide reads, in one-letter code: Vesicular acetylcholine transporter unc-17 (532 aa).

The Cytoplasmic segment spans residues 1-31 (MGFNVPVINRDSEILKADAKKWLEQQDNQKK). A helical transmembrane segment spans residues 32–52 (CVLVIVSIALLLDNMLYMVIV). Over 53 to 101 (PIIPKYLRDIHNYQVTFEGYHNETSQLANGTYLVREVGGRINFLDEELE) the chain is Lumenal, vesicle. 2 N-linked (GlcNAc...) asparagine glycosylation sites follow: N74 and N81. Residues 102–121 (LGWLFASKALLQIFVNPFSG) form a helical membrane-spanning segment. Topologically, residues 122–130 (YIIDRVGYE) are cytoplasmic. A helical transmembrane segment spans residues 131–151 (IPMILGLCTMFFSTAIFALGK). At 152–160 (SYGVLLFAR) the chain is on the lumenal, vesicle side. The helical transmembrane segment at 161–180 (SLQGFGSAFADTSGLAMIAD) threads the bilayer. The Cytoplasmic portion of the chain corresponds to 181 to 191 (RFTEENERSAA). A helical membrane pass occupies residues 192–213 (LGIALAFISFGCLVAPPFGSVL). Residues 214-219 (YSLAGK) lie on the Lumenal, vesicle side of the membrane. The helical transmembrane segment at 220–242 (PVPFLILSFVCLADAIAVFMVIN) threads the bilayer. Residues 243–266 (PHRRGTDSHGEKVQGTPMWRLFMD) lie on the Cytoplasmic side of the membrane. A helical transmembrane segment spans residues 267 to 286 (PFIACCSGALIMANVSLAFL). Residues 287–303 (EPTITTWMSEMMPDTPG) lie on the Lumenal, vesicle side of the membrane. Residues 304–328 (WLVGVIWLPPFFPHVLGVYVTVKML) form a helical membrane-spanning segment. Residues 329–335 (RAFPHHT) are Cytoplasmic-facing. Residues 336 to 356 (WAIAMVGLAMEGIACFAIPYT) traverse the membrane as a helical segment. The Lumenal, vesicle segment spans residues 357–367 (TSVMQLVIPLS). The chain crosses the membrane as a helical span at residues 368–388 (FVCFGIALIDTSLLPMLGHLV). At 389 to 393 (DTRHV) the chain is on the cytoplasmic side. Residues 394-412 (SVYGSVYAIADISYSLAYA) traverse the membrane as a helical segment. Residues 413 to 418 (FGPIIA) lie on the Lumenal, vesicle side of the membrane. Residues 419–440 (GWIVTNWGFTALNIIIFATNVT) traverse the membrane as a helical segment. Residues 441–532 (YAPVLFLLRK…AGYDPLNPQW (92 aa)) lie on the Cytoplasmic side of the membrane.

Belongs to the major facilitator superfamily. Vesicular transporter family. In terms of tissue distribution, detected in most regions of the nervous system including the nerve ring, the ventral and dorsal nerve cords, and the pharyngeal nervous system. Expressed in most cholinergic neurons. In addition, expressed in SIA, SIB and SMB sublateral motor neurons.

Its subcellular location is the cytoplasmic vesicle. The protein localises to the secretory vesicle. It localises to the synaptic vesicle membrane. Its function is as follows. Involved in acetylcholine transport into synaptic vesicles. The sequence is that of Vesicular acetylcholine transporter unc-17 from Caenorhabditis elegans.